Reading from the N-terminus, the 548-residue chain is Folylpolyglutamate synthase (548 aa).

Gly-130 to Ser-133 is an ATP binding site. Residues Ser-157, Glu-234, and His-262 each contribute to the Mg(2+) site. The ATP site is built by Arg-382 and Asp-396.

This sequence belongs to the folylpolyglutamate synthase family. A monovalent cation is required as a cofactor.

The protein resides in the mitochondrion inner membrane. It localises to the mitochondrion matrix. The protein localises to the cytoplasm. The catalysed reaction is (6S)-5,6,7,8-tetrahydrofolyl-(gamma-L-Glu)(n) + L-glutamate + ATP = (6S)-5,6,7,8-tetrahydrofolyl-(gamma-L-Glu)(n+1) + ADP + phosphate + H(+). Its pathway is cofactor biosynthesis; tetrahydrofolylpolyglutamate biosynthesis. Its function is as follows. Catalyzes conversion of folates to polyglutamate derivatives allowing concentration of folate compounds in the cell and the intracellular retention of these cofactors, which are important substrates for most of the folate-dependent enzymes that are involved in one-carbon transfer reactions involved in purine, pyrimidine and amino acid synthesis. Required for methionine synthesis and maintenance of intact mitochondrial DNA. Involved in telomere maintenance. The sequence is that of Folylpolyglutamate synthase from Saccharomyces cerevisiae (strain AWRI1631) (Baker's yeast).